Here is a 24-residue protein sequence, read N- to C-terminus: Brevinin-1Pc (24 aa).

C18 and C24 are oxidised to a cystine.

In terms of tissue distribution, expressed by the skin glands.

The protein localises to the secreted. Antibacterial activity against Gram-positive bacterium S.aureus and Gram-negative bacterium E.coli. Has activity against C.albicans. The polypeptide is Brevinin-1Pc (Lithobates pipiens (Northern leopard frog)).